We begin with the raw amino-acid sequence, 396 residues long: Putative carbamoyltransferase YgeW (396 aa).

Residues 71–74, Gln-98, 165–168, and 330–331 contribute to the carbamoyl phosphate site; these read STRT, HPTQ, and CL.

Belongs to the aspartate/ornithine carbamoyltransferase superfamily. As to quaternary structure, homotrimer.

This is Putative carbamoyltransferase YgeW (ygeW) from Escherichia coli O157:H7.